Here is a 155-residue protein sequence, read N- to C-terminus: Class I hydrophobin C (155 aa).

Residues 1 to 22 (MLVTMRLSRSIAVFTLVTYATG) form the signal peptide. Cystine bridges form between Cys-52–Cys-129, Cys-60–Cys-123, Cys-61–Cys-101, and Cys-130–Cys-148.

Belongs to the fungal hydrophobin family. As to quaternary structure, self-assembles to form functional amyloid fibrils called rodlets. Self-assembly into fibrillar rodlets occurs spontaneously at hydrophobic:hydrophilic interfaces and the rodlets further associate laterally to form amphipathic monolayers.

The protein resides in the secreted. The protein localises to the spore wall. Aerial growth, conidiation, and dispersal of filamentous fungi in the environment rely upon a capability of their secreting small amphipathic proteins called hydrophobins (HPBs) with low sequence identity. Class I can self-assemble into an outermost layer of rodlet bundles on aerial cell surfaces, conferring cellular hydrophobicity that supports fungal growth, development and dispersal; whereas Class II form highly ordered films at water-air interfaces through intermolecular interactions but contribute nothing to the rodlet structure. RodC is a class I hydrophobin that, unlike rodA, is not required for rodlet formation. The sequence is that of Class I hydrophobin C from Aspergillus fumigatus (strain ATCC MYA-4609 / CBS 101355 / FGSC A1100 / Af293) (Neosartorya fumigata).